We begin with the raw amino-acid sequence, 309 residues long: Low density lipoprotein receptor adapter protein 1-B (309 aa).

One can recognise a PID domain in the interval 41–195 (LLEGMLFHLK…SDGEGASSSQ (155 aa)). The interval 179 to 201 (DKREKSGSDGEGASSSQSDGSSS) is disordered. A compositionally biased stretch (low complexity) spans 189–201 (EGASSSQSDGSSS). A Clathrin box motif is present at residues 213–217 (LLDFE). The tract at residues 250–277 (WELDDGLDEAFARLAESRTNPQVLDIGL) is AP-2 complex binding. A [DE]-X(1,2)-F-X-X-[FL]-X-X-X-R motif motif is present at residues 258-267 (EAFARLAESR).

In terms of assembly, interacts (via PID domain) with ldlr (via NPXY motif). Binds to soluble clathrin trimers and to the adapter protein complex 2 (AP-2, beta 2 subunit). Binds to phosphoinositides, which regulate clathrin bud assembly at the cell surface. Interacts with the VLDL receptor (vldlr). Interacts with the vitellogenin receptor. Expressed at high level during oogenesis and embryogenesis. Found at low level in the adult liver and spleen. Found at very low level in testis and heart. Not found in the oocyte vegetal cortex.

It is found in the cytoplasm. Functionally, adapter protein (clathrin-associated sorting protein (CLASP)) required for efficient endocytosis of the LDL receptor (LDLR). Also involved in the vitellogenin receptor mediated endocytosis of nutrients during oogenesis. This chain is Low density lipoprotein receptor adapter protein 1-B, found in Xenopus laevis (African clawed frog).